Here is a 345-residue protein sequence, read N- to C-terminus: Nicotinate-nucleotide--dimethylbenzimidazole phosphoribosyltransferase (345 aa).

E312 functions as the Proton acceptor in the catalytic mechanism.

Belongs to the CobT family.

The enzyme catalyses 5,6-dimethylbenzimidazole + nicotinate beta-D-ribonucleotide = alpha-ribazole 5'-phosphate + nicotinate + H(+). Its pathway is nucleoside biosynthesis; alpha-ribazole biosynthesis; alpha-ribazole from 5,6-dimethylbenzimidazole: step 1/2. In terms of biological role, catalyzes the synthesis of alpha-ribazole-5'-phosphate from nicotinate mononucleotide (NAMN) and 5,6-dimethylbenzimidazole (DMB). The protein is Nicotinate-nucleotide--dimethylbenzimidazole phosphoribosyltransferase of Bacteroides fragilis (strain ATCC 25285 / DSM 2151 / CCUG 4856 / JCM 11019 / LMG 10263 / NCTC 9343 / Onslow / VPI 2553 / EN-2).